The following is a 1876-amino-acid chain: Vitellogenin-2 (1876 aa).

Positions 1-16 are cleaved as a signal peptide; it reads MMWKTLLCCLLAVSAA. The Vitellogenin domain occupies 21 to 838; it reads WEPGKRYEYH…SRDSFMPKSV (818 aa). Residues N211 and N290 are each glycosylated (N-linked (GlcNAc...) asparagine). The disordered stretch occupies residues 322–424; sequence TGEPSQRDSA…SSSSSSEEYL (103 aa). 2 stretches are compositionally biased toward low complexity: residues 330–368 and 387–404; these read SAYALESNSDSSSSSSSSSSEENAANSRHRSSSSSSSSR and SQPRNSRSRRSLQNSKRS. N409 carries N-linked (GlcNAc...) asparagine glycosylation. Residues 411-420 are compositionally biased toward low complexity; it reads SSSSSSSSSS. N-linked (GlcNAc...) asparagine glycans are attached at residues N595, N631, N932, N1012, and N1055. Residues 1192 to 1239 are disordered; sequence SYDNRYTQPEEEEETRQHSKIRRPRSASRKHRRSRHEERAPLENLEVS. Positions 1209-1225 are enriched in basic residues; that stretch reads HSKIRRPRSASRKHRRS. Residues N1318, N1398, N1417, N1424, N1469, N1532, N1636, N1719, N1760, and N1770 are each glycosylated (N-linked (GlcNAc...) asparagine). The 186-residue stretch at 1518–1703 folds into the VWFD domain; it reads PTCVVDYSKV…TLVRDLDRSR (186 aa). Residues C1520 and C1664 are joined by a disulfide bond. Residues 1729-1788 form a disordered region; that stretch reads SGIRPYDIDDDSSSSSSSSSSSSSSSSSSKSNSTSSSSSESNESALPRGENKLHRAQQPS. The segment covering 1741-1772 has biased composition (low complexity); that stretch reads SSSSSSSSSSSSSSSSSKSNSTSSSSSESNES.

It localises to the secreted. In terms of biological role, precursor of the egg-yolk proteins that are sources of nutrients during embryonic development. The polypeptide is Vitellogenin-2 (VG2) (Periplaneta americana (American cockroach)).